Consider the following 970-residue polypeptide: UvrABC system protein A (970 aa).

34 to 41 (GVSGSGKS) serves as a coordination point for ATP. The segment at 284-311 (CPEHGAVMDELSPRLFSFNSPYGACPDC) adopts a C4-type zinc-finger fold. ABC transporter domains lie at 340-617 (WSEK…QRSL) and 637-965 (GNGA…KYLA). 669–676 (GVSGSGKS) provides a ligand contact to ATP. The C4-type zinc-finger motif lies at 768–794 (CEACAGQGVNVIEMNFLPDVYVQCDVC).

This sequence belongs to the ABC transporter superfamily. UvrA family. As to quaternary structure, forms a heterotetramer with UvrB during the search for lesions.

Its subcellular location is the cytoplasm. In terms of biological role, the UvrABC repair system catalyzes the recognition and processing of DNA lesions. UvrA is an ATPase and a DNA-binding protein. A damage recognition complex composed of 2 UvrA and 2 UvrB subunits scans DNA for abnormalities. When the presence of a lesion has been verified by UvrB, the UvrA molecules dissociate. The sequence is that of UvrABC system protein A from Synechocystis sp. (strain ATCC 27184 / PCC 6803 / Kazusa).